Here is a 261-residue protein sequence, read N- to C-terminus: Chanoclavine-I dehydrogenase easD (261 aa).

Residues 1 to 20 form the signal peptide; it reads MPSMTSKVFAITGGASGIGA. Residue Ile-18 coordinates NADP(+). N-linked (GlcNAc...) asparagine glycosylation is present at Asn-43. Residues Asp-66, Arg-132, Tyr-166, Lys-170, and Thr-201 each contribute to the NADP(+) site. The active-site Proton donor is Tyr-166. The active-site Lowers pKa of active site Tyr is Lys-170.

This sequence belongs to the short-chain dehydrogenases/reductases (SDR) family. In terms of assembly, homotetramer.

It catalyses the reaction chanoclavine-I + NAD(+) = chanoclavine-I aldehyde + NADH + H(+). It functions in the pathway alkaloid biosynthesis; ergot alkaloid biosynthesis. Functionally, chanoclavine-I dehydrogenase; part of the gene cluster that mediates the biosynthesis of fungal ergot alkaloid. DmaW catalyzes the first step of ergot alkaloid biosynthesis by condensing dimethylallyl diphosphate (DMAP) and tryptophan to form 4-dimethylallyl-L-tryptophan. The second step is catalyzed by the methyltransferase easF that methylates 4-dimethylallyl-L-tryptophan in the presence of S-adenosyl-L-methionine, resulting in the formation of 4-dimethylallyl-L-abrine. The catalase easC and the FAD-dependent oxidoreductase easE then transform 4-dimethylallyl-L-abrine to chanoclavine-I which is further oxidized by easD in the presence of NAD(+), resulting in the formation of chanoclavine-I aldehyde. Agroclavine dehydrogenase easG then mediates the conversion of chanoclavine-I aldehyde to agroclavine via a non-enzymatic adduct reaction: the substrate is an iminium intermediate that is formed spontaneously from chanoclavine-I aldehyde in the presence of glutathione. The presence of easA is not required to complete this reaction. Further conversion of agroclavine to paspalic acid is a two-step process involving oxidation of agroclavine to elymoclavine and of elymoclavine to paspalic acid, the second step being performed by the elymoclavine oxidase cloA. Paspalic acid is then further converted to D-lysergic acid. Ergopeptines are assembled from D-lysergic acid and three different amino acids by the D-lysergyl-peptide-synthetases composed each of a monomudular and a trimodular nonribosomal peptide synthetase subunit. LpsB and lpsC encode the monomodular subunits responsible for D-lysergic acid activation and incorporation into the ergopeptine backbone. LpsA1 and A2 subunits encode the trimodular nonribosomal peptide synthetase assembling the tripeptide portion of ergopeptines. LpsA1 is responsible for formation of the major ergopeptine, ergotamine, and lpsA2 for alpha-ergocryptine, the minor ergopeptine of the total alkaloid mixture elaborated by C.purpurea. D-lysergyl-tripeptides are assembled by the nonribosomal peptide synthetases and released as N-(D-lysergyl-aminoacyl)-lactams. Cyclolization of the D-lysergyl-tripeptides is performed by the Fe(2+)/2-ketoglutarate-dependent dioxygenase easH which introduces a hydroxyl group into N-(D-lysergyl-aminoacyl)-lactam at alpha-C of the aminoacyl residue followed by spontaneous condensation with the terminal lactam carbonyl group. The protein is Chanoclavine-I dehydrogenase easD of Claviceps purpurea (Ergot fungus).